Consider the following 322-residue polypeptide: Sideroflexin-1 (322 aa).

S2 carries the N-acetylserine modification. Residues 2–102 (SGEVPPNINI…MSAQVPMNMT (101 aa)) are Mitochondrial matrix-facing. The chain crosses the membrane as a helical span at residues 103 to 120 (ITGCMMTFYRTTPAVLFW). At 121–146 (QWINQSFNAVVNYTNRSGDAPLTVNE) the chain is on the mitochondrial intermembrane side. Residues 147–167 (LGTAYVSATTGAVATALGLNA) form a helical membrane-spanning segment. The Mitochondrial matrix portion of the chain corresponds to 168-174 (LTKRVSP). The helical transmembrane segment at 175 to 195 (LIGRFVPFAAVAAANCINIPL) threads the bilayer. Residues 196 to 228 (MRQRELKVGIPVTDENGTRLGESTNAAKQAITQ) lie on the Mitochondrial intermembrane side of the membrane. A helical membrane pass occupies residues 229–249 (VVISRILMAAPGMAIPPFIMN). At 250–266 (TLEKKAFLKRFPWMSAP) the chain is on the mitochondrial matrix side. The chain crosses the membrane as a helical span at residues 267 to 287 (IQVTLVGFCLVFATPLCCALF). Over 288-322 (PQKSSMSVTSLEDELQASIQRTHPEIRRVYFNKGL) the chain is Mitochondrial intermembrane.

The protein belongs to the sideroflexin family. In terms of tissue distribution, widely expressed, with highest expression in kidney and liver.

It localises to the mitochondrion inner membrane. The catalysed reaction is L-serine(in) = L-serine(out). The enzyme catalyses L-alanine(in) = L-alanine(out). It catalyses the reaction L-cysteine(in) = L-cysteine(out). Amino acid transporter importing serine, an essential substrate of the mitochondrial branch of the one-carbon pathway, into mitochondria. Mitochondrial serine is then converted to glycine and formate, which exits to the cytosol where it is used to generate the charged folates that serve as one-carbon donors. May also transport other amino acids including alanine and cysteine. In Mus musculus (Mouse), this protein is Sideroflexin-1.